The primary structure comprises 347 residues: MDPSGEQLHRSEASSSTSSGDPQSAEELSVPEVLCVESGTSETPIPDAQLQDRPLSPQKGAALPEQEELQEYRRSRARSFSLPADPILQAAKLLQQRQQAGQPSSEGGAPAGDCCSKCKKRVQFADSLGLSLASVKHFSEAEEPQVPPAVLSRLHSFPLRAEDLQQLGGLLAVATMPDPLLVPCARLRPHFQLPELRAAEERLRRQRVCLERVQCSQPPRAEVTGSGRVISCPGPRAVAVRYTFTEWRTFLDVPAELDPESVEPLPPLQSGDSGSKAEDSEEGPGTERFHFSLCLPPGLQPKEGEDAGAWGVAIHFAVCYRCEQGEYWDNNEGANYTLRYVCSTDPL.

Residues 1 to 77 form a disordered region; the sequence is MDPSGEQLHR…ELQEYRRSRA (77 aa). The segment covering 13–22 has biased composition (polar residues); it reads ASSSTSSGDP. Serine 81 carries the post-translational modification Phosphoserine. The 140-residue stretch at 200 to 339 folds into the CBM21 domain; sequence EERLRRQRVC…NNEGANYTLR (140 aa). The interval 258-286 is disordered; it reads DPESVEPLPPLQSGDSGSKAEDSEEGPGT.

In terms of biological role, glycogen-targeting subunit for protein phosphatase 1 (PP1). Involved in the regulation of hepatic glycogenesis in a manner coupled to the fasting-feeding cycle and distinct from other glycogen-targeting subunits. The polypeptide is Protein phosphatase 1 regulatory subunit 3G (Ppp1r3g) (Mus musculus (Mouse)).